Consider the following 409-residue polypeptide: Rho-GTPase-activating protein BAG7 (409 aa).

Positions 1–26 (MFNMNLLSTPSSEEGSPQNRSSSMSS) are enriched in polar residues. The tract at residues 1–32 (MFNMNLLSTPSSEEGSPQNRSSSMSSVEGKKD) is disordered. Residues 50–257 (VSLEESLKVA…FLILHASDII (208 aa)) enclose the Rho-GAP domain. The disordered stretch occupies residues 362-409 (KLLGNVGNSSNTGIKDPTERVPRGEHKTKHKQRQSWLRRLTSPSRTQP). The segment covering 377 to 386 (DPTERVPRGE) has biased composition (basic and acidic residues).

As to quaternary structure, interacts with RHO1.

In terms of biological role, acts in signal transduction. Activates RHO1. The sequence is that of Rho-GTPase-activating protein BAG7 (BAG7) from Saccharomyces cerevisiae (strain ATCC 204508 / S288c) (Baker's yeast).